Consider the following 316-residue polypeptide: MASKSRHYLNQPWYIILFIFVLSLIAGTLLSSVYYVLAPIQQQAAEFDRNQQMLMAAQVISSDNTFQVYEKGDWHPALYNTKKQLLEISSTPPKVTVTTLSSYFQNFVRVLLTDTQGNLSSFEDHNLNLEEFLSQPTPVIHGLALYVVYAILHNDAASSKLSASQVAKNPTAIESIVLPIEGFGLWGPIYGFLALEKDGNTVLGTSWYQHGETPGLGANIANPQWQKNFRGKKVFLVSASGETDFAKTTLGLEVIKGSVSAALGDSPKAASSIDGISGATLTCNGVTESFSHSLAPYRALLTFFANSKPSGESHDH.

Residues 13 to 33 (WYIILFIFVLSLIAGTLLSSV) traverse the membrane as a helical segment. FMN phosphoryl threonine is present on Thr-280.

The protein belongs to the NqrC family. In terms of assembly, composed of six subunits; NqrA, NqrB, NqrC, NqrD, NqrE and NqrF. FMN is required as a cofactor.

It localises to the cell inner membrane. It carries out the reaction a ubiquinone + n Na(+)(in) + NADH + H(+) = a ubiquinol + n Na(+)(out) + NAD(+). In terms of biological role, NQR complex catalyzes the reduction of ubiquinone-1 to ubiquinol by two successive reactions, coupled with the transport of Na(+) ions from the cytoplasm to the periplasm. NqrA to NqrE are probably involved in the second step, the conversion of ubisemiquinone to ubiquinol. This chain is Na(+)-translocating NADH-quinone reductase subunit C, found in Chlamydia trachomatis serovar D (strain ATCC VR-885 / DSM 19411 / UW-3/Cx).